The sequence spans 238 residues: Aspartate/glutamate leucyltransferase (238 aa).

It belongs to the R-transferase family. Bpt subfamily.

It localises to the cytoplasm. The enzyme catalyses N-terminal L-glutamyl-[protein] + L-leucyl-tRNA(Leu) = N-terminal L-leucyl-L-glutamyl-[protein] + tRNA(Leu) + H(+). It catalyses the reaction N-terminal L-aspartyl-[protein] + L-leucyl-tRNA(Leu) = N-terminal L-leucyl-L-aspartyl-[protein] + tRNA(Leu) + H(+). In terms of biological role, functions in the N-end rule pathway of protein degradation where it conjugates Leu from its aminoacyl-tRNA to the N-termini of proteins containing an N-terminal aspartate or glutamate. This is Aspartate/glutamate leucyltransferase from Nitrosococcus oceani (strain ATCC 19707 / BCRC 17464 / JCM 30415 / NCIMB 11848 / C-107).